A 610-amino-acid polypeptide reads, in one-letter code: Ecto-NOX disulfide-thiol exchanger 2 (610 aa).

The region spanning 128-207 (KTVFVGGLPE…GRLHVDFAQA (80 aa)) is the RRM domain. Coiled-coil stretches lie at residues 293–328 (IQSANSHVRRLVNEKAAHEKDMEEAKEKFKQALSGI) and 381–505 (RREE…KESC).

Belongs to the ENOX family. The cofactor is Cu cation. Post-translationally, glycosylated. As to expression, found in the sera of cancer patients with a wide variety of cancers including breast, prostate, lung and ovarian cancers, leukemias, and lymphomas. Not found in the serum of healthy volunteers or patients with disorders other than cancer. Probably shed into serum by cancer cells. Found on the cell borders of renal, kidney and ovarian carcinomas but not on the borders of surrounding non-cancerous stromal cells.

The protein localises to the cell membrane. Its subcellular location is the secreted. It localises to the extracellular space. With respect to regulation, inhibited by the antitumor sulfonylurea LY181984, the vabilloid capsaicin, and retinoids. May be involved in cell growth. Probably acts as a terminal oxidase of plasma electron transport from cytosolic NAD(P)H via hydroquinones to acceptors at the cell surface. Hydroquinone oxidase activity alternates with a protein disulfide-thiol interchange/oxidoreductase activity which may control physical membrane displacements associated with vesicle budding or cell enlargement. The activities oscillate with a period length of 22 minutes and play a role in control of the ultradian cellular biological clock. The sequence is that of Ecto-NOX disulfide-thiol exchanger 2 (ENOX2) from Homo sapiens (Human).